The primary structure comprises 3957 residues: Ankyrin-2 (3957 aa).

Basic and acidic residues predominate over residues 1–14 (MMNEDAAQKSDSGE). Residues 1-34 (MMNEDAAQKSDSGEKFNGSSQRRKRPKKSDSNAS) form a disordered region. ANK repeat units follow at residues 30–62 (DSNA…TCNQ), 63–92 (NGLN…SVDS), 96–125 (KGNT…NINA), 129–158 (NGFT…NQST), 162–191 (DGFT…KGKV), 193–220 (LPAL…NADV), 232–261 (SGFT…AVDF), 265–294 (NGIT…QIDA), 298–327 (DGLT…PLLA), 331–360 (NGLS…PVDD), 364–393 (DYLT…NPNA), 397–426 (NGFT…SIQA), 430–459 (SGLT…SPDV), 463–492 (RGET…LVDA), 496–525 (EEQT…HPDA), 529–558 (NGYT…AHSL), 562–591 (KGFT…AADS), 595–624 (NGLT…SPHA), 628–657 (NGYT…ETNI), 661–690 (QGVT…NIHM), 694–723 (SGLT…DQDA), 727–756 (LGYT…NVNA), 760–789 (NGYT…KPNA), and 793–822 (NGNT…EVTT). Phosphoserine is present on residues Ser-31 and Ser-34. The residue at position 378 (Tyr-378) is a Phosphotyrosine. The residue at position 531 (Tyr-531) is a Phosphotyrosine. Residue Ser-846 is modified to Phosphoserine. Thr-853 is modified (phosphothreonine). At Ser-874 the chain carries Phosphoserine. The interaction with SPTBN1 stretch occupies residues 966-1125 (SGFLVSFMVD…ELNEILNGMD (160 aa)). 2 consecutive ZU5 domains span residues 968–1156 (FLVS…VVSR) and 1158–1304 (KQDS…LIDC). The UPA domain stretch occupies residues 1289–1423 (VSFTTNVSAR…FVKVRDTTQE (135 aa)). Tyr-1382 carries the phosphotyrosine modification. Residues 1450–1535 (ITLPIYTKES…SDKAGSIKVK (86 aa)) form the Death 1 domain. The interval 1457–1486 (KESESDQEQEEEIDMTSEKNDETESTETSV) is disordered. Phosphoserine occurs at positions 1459, 1461, 1473, 1500, and 1596. A compositionally biased stretch (acidic residues) spans 1461–1471 (SDQEQEEEIDM). 7 disordered regions span residues 1670–2137 (AVGR…TDFS), 2197–2411 (ALDG…GLEL), 2430–2484 (AVSH…GIFP), 2507–2586 (SRLL…TPEE), 2604–2852 (EAKQ…SLPH), 2864–2904 (DISA…TDRF), and 2923–2951 (QITS…ANHT). 2 stretches are compositionally biased toward basic and acidic residues: residues 1674 to 1683 (SSEKEGKDIP) and 1711 to 1733 (KQKQ…KGSS). Phosphoserine is present on residues Ser-1732, Ser-1733, and Ser-1736. Over residues 1766 to 1783 (IKDKVKALQKRVEDEQKG) the composition is skewed to basic and acidic residues. 7 Repeat A repeats span residues 1806-1817 (HPAASPSLKSER), 1818-1829 (HAPGSPSPKTER), 1830-1841 (HSTLSSSAKTER), 1842-1853 (HPPVSPSSKTEK), 1854-1865 (HSPVSPSAKTER), 1866-1877 (HSPASSSSKTEK), and 1878-1889 (HSPVSPSTKTER). The repeat-rich region stretch occupies residues 1806-1983 (HPAASPSLKS…PVSPTSKTER (178 aa)). Residues Ser-1855 and Ser-1858 each carry the phosphoserine modification. Basic and acidic residues-rich tracts occupy residues 1886 to 1902 (KTER…ERHP) and 1921 to 1937 (RTEK…EKRL). The Repeat A; approximate repeat unit spans residues 1890-1900 (HSPVSSTKTER). Repeat A repeat units follow at residues 1901–1912 (HPPVSPSGKTDK) and 1913–1924 (RPPVSPSGRTEK). Residues 1925–1935 (HPPVSPGRTEK) form a Repeat A; approximate repeat. A Phosphoserine modification is found at Ser-1929. Repeat A repeat units follow at residues 1936-1947 (RLPVSPSGRTDK), 1948-1959 (HQPVSTAGKTEK), 1960-1971 (HLPVSPSGKTEK), and 1972-1983 (QPPVSPTSKTER). Basic and acidic residues-rich tracts occupy residues 1980-1994 (KTER…RELM), 2003-2034 (PSKH…KEKG), 2075-2093 (VKKE…HKIP), and 2102-2117 (EESH…KMAD). Ser-2127 carries the post-translational modification Phosphoserine. Residues 2128–2137 (PDRKTSTDFS) are compositionally biased toward basic and acidic residues. Phosphothreonine is present on Thr-2239. Residues 2240-2251 (PETSPESLSFSP) are compositionally biased toward polar residues. Ser-2243 is subject to Phosphoserine. Positions 2252-2282 (KKSEEQTGETKESTKTETTTEIRSEKEHPTT) are enriched in basic and acidic residues. The residue at position 2269 (Thr-2269) is a Phosphothreonine. Ser-2275 is subject to Phosphoserine. Residues 2355–2376 (TFGSSAHKTQTDSEVQESTATS) are compositionally biased toward polar residues. 5 positions are modified to phosphoserine: Ser-2405, Ser-2440, Ser-2454, Ser-2516, and Ser-2521. Positions 2523–2545 (EQTSLMESSGKSPLSPDTPSSEE) are enriched in polar residues. Composition is skewed to basic and acidic residues over residues 2576-2586 (NGEKKRFTPEE) and 2604-2619 (EAKQ…KQEE). Phosphothreonine is present on Thr-2583. Phosphoserine occurs at positions 2679 and 2701. Positions 2696–2705 (PSSMDSNSSP) are enriched in low complexity. Basic and acidic residues predominate over residues 2729 to 2776 (EPGKSEEEKDSESHLAEDRHAVSTEAEDRSYDKLNRDTDQPKICDGHG). 2 positions are modified to phosphoserine: Ser-2781 and Ser-2795. The segment covering 2781-2791 (SPSSSAAPVSS) has biased composition (low complexity). A compositionally biased stretch (polar residues) spans 2892–2903 (SQDSSITTQTDR). Residue Ser-2956 is modified to Phosphoserine. Disordered regions lie at residues 2987-3016 (NFEG…SSFE), 3069-3099 (LMVD…SEQN), and 3136-3462 (QESR…PTKE). The span at 2998-3016 (QQESTLWEMQSDSVSSSFE) shows a compositional bias: polar residues. At Ser-3075 the chain carries Phosphoserine. The residue at position 3078 (Thr-3078) is a Phosphothreonine. Positions 3078 to 3087 (TTPDTTPART) are enriched in low complexity. Residues 3090–3099 (EEGTPTSEQN) are compositionally biased toward polar residues. Over residues 3137 to 3149 (ESREETLSEDVKE) the composition is skewed to basic and acidic residues. Positions 3157–3169 (LPLETSAESLALS) are enriched in low complexity. The segment covering 3175–3194 (VDDEADLLPDDVSEEVEEIP) has biased composition (acidic residues). 2 stretches are compositionally biased toward polar residues: residues 3198–3212 (AQLN…STET) and 3256–3265 (LDFSTLTRSV). Phosphoserine is present on residues Ser-3273, Ser-3276, and Ser-3277. Residues 3335-3344 (EENKADEAKP) are compositionally biased toward basic and acidic residues. Over residues 3357 to 3374 (VEQQLSDLDTSVQKTVAP) the composition is skewed to polar residues. 2 positions are modified to phosphoserine: Ser-3390 and Ser-3409. Residues 3409–3423 (SYTETETESRERAEE) show a composition bias toward basic and acidic residues. Residues 3446 to 3460 (SRSTTSSCRGGTSPT) are compositionally biased toward low complexity. The residue at position 3474 (Ser-3474) is a Phosphoserine. Residues 3569 to 3653 (IEERLAYIAD…DIVHLMETNT (85 aa)) form the Death 2 domain. Position 3735 is a phosphoserine (Ser-3735). Phosphothreonine is present on residues Thr-3776, Thr-3797, Thr-3803, and Thr-3814. A disordered region spans residues 3777–3858 (PGTETSETQK…VESADNQPET (82 aa)). At Ser-3823 the chain carries Phosphoserine. Over residues 3832–3841 (PSEHREESSP) the composition is skewed to basic and acidic residues. A Phosphoserine modification is found at Ser-3909.

In terms of assembly, interacts with RHBG and SPTBN1. Colocalizes with Na/K ATPase, Na/Ca exchanger and SPTBN1. Directly interacts with DMD; this interaction is necessary for DMD localization at the sarcolemma. Interacts with DCTN4; this interaction is required for DCTN4 retention at costameres. Identified in complexes that contain VIM, EZR, AHNAK, BFSP1, BFSP2, ANK2, PLEC, PRX and spectrin. Interacts (via death domain) with RABGAP1L (via Rab-GAP TBC domain). Phosphorylated at multiple sites by different protein kinases and each phosphorylation event regulates the protein's structure and function. In terms of tissue distribution, present in plasma membrane of neurons as well as glial cells throughout the brain. Expressed in fetal brain and in temporal cortex of adult brain. Also expressed in the inner segments of rod photoreceptors in retina.

It is found in the cytoplasm. Its subcellular location is the cytoskeleton. The protein localises to the membrane. It localises to the myofibril. The protein resides in the sarcomere. It is found in the m line. Its subcellular location is the apical cell membrane. The protein localises to the cell membrane. It localises to the postsynaptic cell membrane. The protein resides in the early endosome. It is found in the recycling endosome. Its subcellular location is the lysosome. The protein localises to the mitochondrion. It localises to the z line. The protein resides in the sarcolemma. It is found in the T-tubule. In terms of biological role, plays an essential role in the localization and membrane stabilization of ion transporters and ion channels in several cell types, including cardiomyocytes, as well as in striated muscle cells. In skeletal muscle, required for proper localization of DMD and DCTN4 and for the formation and/or stability of a special subset of microtubules associated with costameres and neuromuscular junctions. In cardiomyocytes, required for coordinate assembly of Na/Ca exchanger, SLC8A1/NCX1, Na/K ATPases ATP1A1 and ATP1A2 and inositol 1,4,5-trisphosphate (InsP3) receptors at sarcoplasmic reticulum/sarcolemma sites. Required for expression and targeting of SPTBN1 in neonatal cardiomyocytes and for the regulation of neonatal cardiomyocyte contraction rate. In the inner segment of rod photoreceptors, required for the coordinated expression of the Na/K ATPase, Na/Ca exchanger and beta-2-spectrin (SPTBN1). Plays a role in endocytosis and intracellular protein transport. Associates with phosphatidylinositol 3-phosphate (PI3P)-positive organelles and binds dynactin to promote long-range motility of cells. Recruits RABGAP1L to (PI3P)-positive early endosomes, where RABGAP1L inactivates RAB22A, and promotes polarized trafficking to the leading edge of the migrating cells. Part of the ANK2/RABGAP1L complex which is required for the polarized recycling of fibronectin receptor ITGA5 ITGB1 to the plasma membrane that enables continuous directional cell migration. The sequence is that of Ankyrin-2 (ANK2) from Homo sapiens (Human).